The primary structure comprises 552 residues: Steroid transmembrane transporter SLC22A24 (552 aa).

Transmembrane regions (helical) follow at residues 16 to 36 (FQILQTAFFCICILIAYPHML), 144 to 164 (LISVAQSLFMVAQLLGGLIFG), 178 to 198 (CCLLLFAISGTCAAIAPTFPV), 204 to 224 (FLGGICLMNIITNAVSTMSEW), 235 to 255 (GIILNSCNIGQILMGGLGFVI), 267 to 287 (IPLFILFLFSRSVLESAQWLI), 350 to 370 (IFYLSFVRFAATIPFLGLMLN), 378 to 398 (IFLFQIIFGAVTFIVRCAVLL), 407 to 427 (ISQMVSSFLVGIPILVNIFLS), 435 to 455 (VALATLGIGATTAIFTTHTVH), 469 to 489 (IGLNAMFSRLGATLAPLLMIL), and 496 to 516 (LPWIIYGVSSILAGLVVLLLP). The interval 524–552 (PNTIQDVENNRRDSRKTKQEDISMKVTQF) is disordered. Residues 531 to 546 (ENNRRDSRKTKQEDIS) show a composition bias toward basic and acidic residues.

Belongs to the major facilitator (TC 2.A.1) superfamily. Organic cation transporter (TC 2.A.1.19) family.

The protein resides in the cell membrane. The enzyme catalyses estrone 3-sulfate(out) + glutarate(in) = estrone 3-sulfate(in) + glutarate(out). It catalyses the reaction 17beta-estradiol 17-O-(beta-D-glucuronate)(out) + glutarate(in) = 17beta-estradiol 17-O-(beta-D-glucuronate)(in) + glutarate(out). The catalysed reaction is taurocholate(out) + glutarate(in) = taurocholate(in) + glutarate(out). It carries out the reaction glycocholate(out) + glutarate(in) = glycocholate(in) + glutarate(out). The enzyme catalyses dehydroepiandrosterone 3-sulfate(out) + glutarate(in) = dehydroepiandrosterone 3-sulfate(in) + glutarate(out). It catalyses the reaction glutarate(in) + succinate(out) = glutarate(out) + succinate(in). Functionally, renal transmembrane organic anion/dicarboxylate exchanger that participates in the reabsorption of conjugated steroids, as well as bile acids, driven by an outward gradient of dicarboxylates such as glutarate or succinate. Transports taurocholate, estrone 3-sulfate, and estradiol-17-glucuronide (17beta-estradiol 17-O-(beta-D-glucuronate)), but not androstanediol glucuronide (5alpha-androstane-3alpha,17beta-diol 3-O-(beta-D-glucuronate)). This chain is Steroid transmembrane transporter SLC22A24, found in Equus caballus (Horse).